Here is a 215-residue protein sequence, read N- to C-terminus: MNLTIYLITDDKYFKDRDLFNTIEQALQGGVTAVQYRFENKTTRQMYEELVKLRELTRKYNADLVVNDRVDLALAVEADGVHIGKDDLPPEVVRKIVGDKMYIGYTANSLEEVKRAQELPVDYIGFGSIYHTSTKENYKLVGVEALKEAVKISQKPIVCIGGIMPYRVPEVVRAGCRNIAVSSGILGFADVKKAAESIKRAYQETLRMLMLMGKV.

4-amino-2-methyl-5-(diphosphooxymethyl)pyrimidine contacts are provided by residues glutamine 35 to glutamate 39 and asparagine 67. Mg(2+) is bound by residues aspartate 68 and aspartate 87. Threonine 106 is a 4-amino-2-methyl-5-(diphosphooxymethyl)pyrimidine binding site. Threonine 132 to threonine 134 contributes to the 2-[(2R,5Z)-2-carboxy-4-methylthiazol-5(2H)-ylidene]ethyl phosphate binding site. Lysine 135 contributes to the 4-amino-2-methyl-5-(diphosphooxymethyl)pyrimidine binding site. Glycine 162 contributes to the 2-[(2R,5Z)-2-carboxy-4-methylthiazol-5(2H)-ylidene]ethyl phosphate binding site.

Belongs to the thiamine-phosphate synthase family. The cofactor is Mg(2+).

It carries out the reaction 2-[(2R,5Z)-2-carboxy-4-methylthiazol-5(2H)-ylidene]ethyl phosphate + 4-amino-2-methyl-5-(diphosphooxymethyl)pyrimidine + 2 H(+) = thiamine phosphate + CO2 + diphosphate. The enzyme catalyses 2-(2-carboxy-4-methylthiazol-5-yl)ethyl phosphate + 4-amino-2-methyl-5-(diphosphooxymethyl)pyrimidine + 2 H(+) = thiamine phosphate + CO2 + diphosphate. It catalyses the reaction 4-methyl-5-(2-phosphooxyethyl)-thiazole + 4-amino-2-methyl-5-(diphosphooxymethyl)pyrimidine + H(+) = thiamine phosphate + diphosphate. It functions in the pathway cofactor biosynthesis; thiamine diphosphate biosynthesis; thiamine phosphate from 4-amino-2-methyl-5-diphosphomethylpyrimidine and 4-methyl-5-(2-phosphoethyl)-thiazole: step 1/1. Its function is as follows. Condenses 4-methyl-5-(beta-hydroxyethyl)thiazole monophosphate (THZ-P) and 2-methyl-4-amino-5-hydroxymethyl pyrimidine pyrophosphate (HMP-PP) to form thiamine monophosphate (TMP). The protein is Thiamine-phosphate synthase 1 of Aquifex aeolicus (strain VF5).